The primary structure comprises 537 residues: Efflux pump ustT (537 aa).

The span at 1-25 (MAKEAQSLHELDNMKEKEVDQEKKA) shows a compositional bias: basic and acidic residues. Residues 1-50 (MAKEAQSLHELDNMKEKEVDQEKKAPTSVGDQEEHDDPKKQASHSQNVSE) are disordered. N-linked (GlcNAc...) asparagine glycosylation is present at Asn47. 8 helical membrane passes run 71-91 (PLAM…VSLL), 104-124 (WVYM…AGAM), 137-157 (GIGL…NAPL), 162-182 (MFLG…PLIG), 193-213 (WCFI…FFFV), 236-256 (LGSA…QWAG), 266-286 (IILL…SQML), and 304-324 (FGSF…TYWI). N-linked (GlcNAc...) asparagine glycosylation is present at Asn333. The next 4 membrane-spanning stretches (helical) occupy residues 339-359 (AGIR…MGGG), 363-383 (LIGY…VGAG), 397-417 (WIGY…QASL), and 430-450 (TAIS…VCIG). An N-linked (GlcNAc...) asparagine glycan is attached at Asn501. Residues 507-527 (TFYVALAAGITSMLSAFLVQW) traverse the membrane as a helical segment.

The protein belongs to the major facilitator superfamily. TCR/Tet family.

The protein localises to the cell membrane. Functionally, efflux pump; part of the gene cluster that mediates the biosynthesis of ustilaginoidins, dimeric gamma-naphthopyrones isolated from different fungal species. The chain is Efflux pump ustT from Ustilaginoidea virens (Rice false smut fungus).